The primary structure comprises 235 residues: Secretory carrier-associated membrane protein 5 (235 aa).

Over 1-39 (MAEKVNNFPPLPKFIPLKPCFYQDFEADIPPQHLSLTKR) the chain is Cytoplasmic. A helical membrane pass occupies residues 40–60 (LYYLWMLNSVTLAVNLVGCLA). Residues 61-67 (WLIGGGG) lie on the Extracellular side of the membrane. The chain crosses the membrane as a helical span at residues 68-88 (ATNFGLAFLWLILFTPCSYVC). At 89–102 (WFRPIYKAFKTDSS) the chain is on the cytoplasmic side. The helical transmembrane segment at 103 to 125 (FSFMAFFFTFMAQLVISIIQAVG) threads the bilayer. The Extracellular portion of the chain corresponds to 126-148 (IPGWGVCGWIATISFFGTNIGSA). Residues 149–169 (VVMLIPTVMFTVVAVFSFIAL) traverse the membrane as a helical segment. The Cytoplasmic segment spans residues 170–235 (SMVHKFYRGS…TPNYTYSNEM (66 aa)).

Belongs to the SCAMP family. SCAMP5 subfamily. As to quaternary structure, interacts (via C-terminal part) with SYT1 and SYT2; interaction with synaptotagmins making a link with the SNARE molecules. Interacts with SLC9A7. As to expression, brain-specific.

It localises to the cell membrane. Its subcellular location is the golgi apparatus membrane. The protein localises to the golgi apparatus. It is found in the trans-Golgi network membrane. The protein resides in the recycling endosome membrane. It localises to the cytoplasmic vesicle. Its subcellular location is the secretory vesicle. The protein localises to the synaptic vesicle membrane. Its function is as follows. Required for the calcium-dependent exocytosis of signal sequence-containing cytokines such as CCL5. Probably acts in cooperation with the SNARE machinery. The polypeptide is Secretory carrier-associated membrane protein 5 (Scamp5) (Mus musculus (Mouse)).